Consider the following 204-residue polypeptide: Peptide deformylase (204 aa).

Positions 131 and 174 each coordinate Fe cation. Glutamate 175 is a catalytic residue. Histidine 178 lines the Fe cation pocket.

The protein belongs to the polypeptide deformylase family. It depends on Fe(2+) as a cofactor.

It carries out the reaction N-terminal N-formyl-L-methionyl-[peptide] + H2O = N-terminal L-methionyl-[peptide] + formate. Its function is as follows. Removes the formyl group from the N-terminal Met of newly synthesized proteins. Requires at least a dipeptide for an efficient rate of reaction. N-terminal L-methionine is a prerequisite for activity but the enzyme has broad specificity at other positions. The sequence is that of Peptide deformylase from Streptococcus equi subsp. zooepidemicus (strain H70).